We begin with the raw amino-acid sequence, 336 residues long: tRNA N6-adenosine threonylcarbamoyltransferase (336 aa).

H115 and H119 together coordinate Fe cation. Substrate is bound by residues 137-141 (LVSGG), D170, G183, D187, and N276. Residue D302 coordinates Fe cation.

The protein belongs to the KAE1 / TsaD family. The cofactor is Fe(2+).

The protein resides in the cytoplasm. It carries out the reaction L-threonylcarbamoyladenylate + adenosine(37) in tRNA = N(6)-L-threonylcarbamoyladenosine(37) in tRNA + AMP + H(+). Functionally, required for the formation of a threonylcarbamoyl group on adenosine at position 37 (t(6)A37) in tRNAs that read codons beginning with adenine. Is involved in the transfer of the threonylcarbamoyl moiety of threonylcarbamoyl-AMP (TC-AMP) to the N6 group of A37, together with TsaE and TsaB. TsaD likely plays a direct catalytic role in this reaction. The polypeptide is tRNA N6-adenosine threonylcarbamoyltransferase (Streptococcus suis (strain 98HAH33)).